Reading from the N-terminus, the 108-residue chain is MDNQHRKIAGYRELTQDDIDLMNRVKAVGAELLALQAALAGRLSTDLEVKQAAAKASKLAPEHESSPECVELRRFLAAEPLRWAAIAKTDIQTGVMALVRAIAQPEGC.

Glutamine 4, tyrosine 11, and lysine 26 together coordinate 3',3'-cGAMP.

This sequence belongs to the Acb2 family. In terms of assembly, homohexamer in apo and 3',3'-cGAMP-bound form.

In terms of biological role, antagonizes CBASS (cyclic oligonucleotide-based antiphage signaling system). Binds and sequesters host-produced 3',3'-cyclic GMP-AMP (cGAMP) (thus preventing host CapV activation) without degrading the cyclic nucleotide. Probably binds some other cyclic dinucleotides as well. This chain is Anti-CBASS protein 2, found in Pseudomonas phage JBD67.